A 701-amino-acid polypeptide reads, in one-letter code: Nucleolar transcription factor 1-B (701 aa).

The disordered stretch occupies residues 1 to 21 (MNGAAGGDTQGKMTAPKDQDQ). 5 DNA-binding regions (HMG box) span residues 112 to 180 (PKKP…AKFR), 196 to 264 (PEKP…REYM), 298 to 362 (TKPP…MRFL), 422 to 489 (PETP…SDMR), and 508 to 574 (KKAP…DTWM). Positions 382-426 (MKRKRTNTPASKMATEDAAKVKSRSGQADKKKAAEERAKLPETPK) are disordered. Residues 408–426 (QADKKKAAEERAKLPETPK) show a composition bias toward basic and acidic residues. Residues 584–701 (AYKEQNTNKR…SADSSDSDSN (118 aa)) are disordered. The span at 597–612 (TKIQAPSSKSKLVIQS) shows a compositional bias: polar residues. Over residues 615–682 (DDDEDDEDDE…DNEEDDDDNE (68 aa)) the composition is skewed to acidic residues. The span at 683 to 695 (SGSSSSSSSSADS) shows a compositional bias: low complexity.

As to quaternary structure, XUBF consists of 2 polypeptides of 82 and 85 kDa, encoded by the same or closely related genes.

It is found in the nucleus. In terms of biological role, UBF recognizes the ribosomal RNA gene promotor and activates transcription mediated by RNA polymerase I through cooperative interactions with the species-specific factor SL1. It binds specifically to the upstream control element. The protein is Nucleolar transcription factor 1-B (ubtf-b) of Xenopus laevis (African clawed frog).